The following is a 412-amino-acid chain: Glucose-1-phosphate adenylyltransferase (412 aa).

Alpha-D-glucose 1-phosphate contacts are provided by residues G163, 179-180 (EK), and S197.

It belongs to the bacterial/plant glucose-1-phosphate adenylyltransferase family. Homotetramer.

The enzyme catalyses alpha-D-glucose 1-phosphate + ATP + H(+) = ADP-alpha-D-glucose + diphosphate. It participates in glycan biosynthesis; glycogen biosynthesis. Functionally, involved in the biosynthesis of ADP-glucose, a building block required for the elongation reactions to produce glycogen. Catalyzes the reaction between ATP and alpha-D-glucose 1-phosphate (G1P) to produce pyrophosphate and ADP-Glc. The sequence is that of Glucose-1-phosphate adenylyltransferase from Frankia casuarinae (strain DSM 45818 / CECT 9043 / HFP020203 / CcI3).